We begin with the raw amino-acid sequence, 467 residues long: 3-isopropylmalate dehydratase large subunit (467 aa).

[4Fe-4S] cluster-binding residues include Cys347, Cys407, and Cys410.

This sequence belongs to the aconitase/IPM isomerase family. LeuC type 1 subfamily. As to quaternary structure, heterodimer of LeuC and LeuD. [4Fe-4S] cluster is required as a cofactor.

It catalyses the reaction (2R,3S)-3-isopropylmalate = (2S)-2-isopropylmalate. The protein operates within amino-acid biosynthesis; L-leucine biosynthesis; L-leucine from 3-methyl-2-oxobutanoate: step 2/4. In terms of biological role, catalyzes the isomerization between 2-isopropylmalate and 3-isopropylmalate, via the formation of 2-isopropylmaleate. This Pelagibacter ubique (strain HTCC1062) protein is 3-isopropylmalate dehydratase large subunit.